A 151-amino-acid chain; its full sequence is Ribosome maturation factor RimP (151 aa).

This sequence belongs to the RimP family.

It is found in the cytoplasm. Its function is as follows. Required for maturation of 30S ribosomal subunits. In Shewanella baltica (strain OS223), this protein is Ribosome maturation factor RimP.